The following is a 191-amino-acid chain: ATP synthase subunit b (191 aa).

Residues 10-30 (FLVPGPTAIAELIVFLLILFI) form a helical membrane-spanning segment. A disordered region spans residues 170–191 (RAQRQPAASDVVGGQQREEVHR).

The protein belongs to the ATPase B chain family. As to quaternary structure, F-type ATPases have 2 components, F(1) - the catalytic core - and F(0) - the membrane proton channel. F(1) has five subunits: alpha(3), beta(3), gamma(1), delta(1), epsilon(1). F(0) has three main subunits: a(1), b(2) and c(10-14). The alpha and beta chains form an alternating ring which encloses part of the gamma chain. F(1) is attached to F(0) by a central stalk formed by the gamma and epsilon chains, while a peripheral stalk is formed by the delta and b chains.

Its subcellular location is the cell membrane. Functionally, f(1)F(0) ATP synthase produces ATP from ADP in the presence of a proton or sodium gradient. F-type ATPases consist of two structural domains, F(1) containing the extramembraneous catalytic core and F(0) containing the membrane proton channel, linked together by a central stalk and a peripheral stalk. During catalysis, ATP synthesis in the catalytic domain of F(1) is coupled via a rotary mechanism of the central stalk subunits to proton translocation. Its function is as follows. Component of the F(0) channel, it forms part of the peripheral stalk, linking F(1) to F(0). The polypeptide is ATP synthase subunit b (Acidothermus cellulolyticus (strain ATCC 43068 / DSM 8971 / 11B)).